A 649-amino-acid polypeptide reads, in one-letter code: Quinol oxidase subunit 1 (649 aa).

Over M1–L15 the chain is Extracellular. A helical transmembrane segment spans residues I16 to L34. At T35–L56 the chain is on the cytoplasmic side. The chain crosses the membrane as a helical span at residues G57 to G75. Residues L76–E97 are Extracellular-facing. A helical membrane pass occupies residues I98 to G117. Fe(II)-heme a is bound at residue H102. Residues L118–N139 are Cytoplasmic-facing. Residues L140–V157 form a helical membrane-spanning segment. At I158 to L190 the chain is on the extracellular side. Residues Q191–L209 traverse the membrane as a helical segment. Topologically, residues K210–T227 are cytoplasmic. Residues T228 to L246 traverse the membrane as a helical segment. The Extracellular segment spans residues A247–A272. A helical transmembrane segment spans residues N273–G292. Cu cation is bound by residues H280 and Y284. Residues H280–Y284 constitute a cross-link (1'-histidyl-3'-tyrosine (His-Tyr)). Over I293–S315 the chain is Cytoplasmic. Residues I316–G335 traverse the membrane as a helical segment. Residues H329 and H330 each contribute to the Cu cation site. Residues N336–F343 are Extracellular-facing. A helical transmembrane segment spans residues F344 to W362. The Cytoplasmic segment spans residues L363–M377. A helical membrane pass occupies residues L378–L397. Residues A398 to Q405 are Extracellular-facing. Residues Y406 to V425 form a helical membrane-spanning segment. H415 serves as a coordination point for heme a3. H417 contacts Fe(II)-heme a. The Cytoplasmic segment spans residues F426–F452. The chain crosses the membrane as a helical span at residues F453 to L472. Topologically, residues Q473–T490 are extracellular. A helical transmembrane segment spans residues L491–C510. The Cytoplasmic segment spans residues Y511 to S584. The helical transmembrane segment at N585–V604 threads the bilayer. Residues F605–M610 are Extracellular-facing. The helical transmembrane segment at G611 to N631 threads the bilayer. The Cytoplasmic portion of the chain corresponds to G632–E649.

The protein belongs to the heme-copper respiratory oxidase family. Cu cation is required as a cofactor. Requires ferriheme a as cofactor. It depends on Heme A3. as a cofactor.

It localises to the cell membrane. The enzyme catalyses 2 a quinol + O2 = 2 a quinone + 2 H2O. Its pathway is energy metabolism; oxidative phosphorylation. In terms of biological role, catalyzes quinol oxidation with the concomitant reduction of oxygen to water. Major component for energy conversion during vegetative growth. This Bacillus subtilis (strain 168) protein is Quinol oxidase subunit 1 (qoxB).